The following is a 148-amino-acid chain: 3-dehydroquinate dehydratase (148 aa).

The Proton acceptor role is filled by Tyr-22. Substrate contacts are provided by Asn-73, His-79, and Asp-86. The active-site Proton donor is His-99. Residues 100–101 and Arg-110 each bind substrate; that span reads LS.

Belongs to the type-II 3-dehydroquinase family. As to quaternary structure, homododecamer.

It carries out the reaction 3-dehydroquinate = 3-dehydroshikimate + H2O. The protein operates within metabolic intermediate biosynthesis; chorismate biosynthesis; chorismate from D-erythrose 4-phosphate and phosphoenolpyruvate: step 3/7. Functionally, catalyzes a trans-dehydration via an enolate intermediate. This Jannaschia sp. (strain CCS1) protein is 3-dehydroquinate dehydratase.